The primary structure comprises 120 residues: Ribosome-binding factor A (120 aa).

This sequence belongs to the RbfA family. In terms of assembly, monomer. Binds 30S ribosomal subunits, but not 50S ribosomal subunits or 70S ribosomes.

It localises to the cytoplasm. One of several proteins that assist in the late maturation steps of the functional core of the 30S ribosomal subunit. Associates with free 30S ribosomal subunits (but not with 30S subunits that are part of 70S ribosomes or polysomes). Required for efficient processing of 16S rRNA. May interact with the 5'-terminal helix region of 16S rRNA. The sequence is that of Ribosome-binding factor A from Desulforamulus reducens (strain ATCC BAA-1160 / DSM 100696 / MI-1) (Desulfotomaculum reducens).